We begin with the raw amino-acid sequence, 361 residues long: Histidinol-phosphate aminotransferase (361 aa).

Position 221 is an N6-(pyridoxal phosphate)lysine (Lys-221).

The protein belongs to the class-II pyridoxal-phosphate-dependent aminotransferase family. Histidinol-phosphate aminotransferase subfamily. The cofactor is pyridoxal 5'-phosphate.

The enzyme catalyses L-histidinol phosphate + 2-oxoglutarate = 3-(imidazol-4-yl)-2-oxopropyl phosphate + L-glutamate. It participates in amino-acid biosynthesis; L-histidine biosynthesis; L-histidine from 5-phospho-alpha-D-ribose 1-diphosphate: step 7/9. In Methanocella arvoryzae (strain DSM 22066 / NBRC 105507 / MRE50), this protein is Histidinol-phosphate aminotransferase.